The chain runs to 447 residues: Cysteine--tRNA ligase (447 aa).

Residue C28 coordinates Zn(2+). Positions 30–40 match the 'HIGH' region motif; that stretch reads PTVYNYIHIGN. Residues C211, H236, and E240 each coordinate Zn(2+). Residues 268-272 carry the 'KMSKS' region motif; sequence KMSKS. K271 contacts ATP.

This sequence belongs to the class-I aminoacyl-tRNA synthetase family. In terms of assembly, monomer. The cofactor is Zn(2+).

It localises to the cytoplasm. It carries out the reaction tRNA(Cys) + L-cysteine + ATP = L-cysteinyl-tRNA(Cys) + AMP + diphosphate. The chain is Cysteine--tRNA ligase from Streptococcus pyogenes serotype M6 (strain ATCC BAA-946 / MGAS10394).